We begin with the raw amino-acid sequence, 170 residues long: MAETTPEQPLEEIDIDSYTTESEVPVEGEYTSESMASAFGEPQPAAGLGRRKNAIARVRIVPGTGKWKVNGRTLEDYFPNKVHQQEVNEPFKVLELDNRYDVIARISGGGVSGQAGALRLGVARALNEADVDNNRGALKKAGYLKRDDRAVERKKAGLKKARKAPQYSKR.

The disordered stretch occupies residues 1-47 (MAETTPEQPLEEIDIDSYTTESEVPVEGEYTSESMASAFGEPQPAAG).

The protein belongs to the universal ribosomal protein uS9 family.

In Streptomyces coelicolor (strain ATCC BAA-471 / A3(2) / M145), this protein is Small ribosomal subunit protein uS9 (rpsI).